The following is a 266-amino-acid chain: N-formylglutamate deformylase (266 aa).

This sequence belongs to the N-formylglutamate deformylase family. As to quaternary structure, monomer.

The enzyme catalyses N-formyl-L-glutamate + H2O = formate + L-glutamate. The protein operates within amino-acid degradation; L-histidine degradation into L-glutamate; L-glutamate from N-formimidoyl-L-glutamate (deiminase route): step 2/2. Functionally, catalyzes the hydrolysis of N-formyl-L-glutamate to formate and L-glutamate. Shows weak activity with N-formyl-L-glutamine. This chain is N-formylglutamate deformylase, found in Pseudomonas aeruginosa (strain ATCC 15692 / DSM 22644 / CIP 104116 / JCM 14847 / LMG 12228 / 1C / PRS 101 / PAO1).